The sequence spans 373 residues: Probable neutral protease 2 homolog MCYG_05201 (373 aa).

An N-terminal signal peptide occupies residues 1–19 (MQFFTALAAVGALVAPALA). A propeptide spanning residues 20–187 (LPTQVPANQS…AHIVGTIDKR (168 aa)) is cleaved from the precursor. Cystine bridges form between Cys195–Cys265 and Cys272–Cys290. Position 314 (His314) interacts with Zn(2+). Glu315 is an active-site residue. Zn(2+) contacts are provided by His318 and Asp329.

It belongs to the peptidase M35 family. The cofactor is Zn(2+).

It localises to the secreted. It catalyses the reaction Preferential cleavage of bonds with hydrophobic residues in P1'. Also 3-Asn-|-Gln-4 and 8-Gly-|-Ser-9 bonds in insulin B chain.. Its function is as follows. Probable secreted metalloprotease that shows high activities on basic nuclear substrates such as histone and protamine. May be involved in virulence. This chain is Probable neutral protease 2 homolog MCYG_05201, found in Arthroderma otae (strain ATCC MYA-4605 / CBS 113480) (Microsporum canis).